The sequence spans 1122 residues: Cytosolic carboxypeptidase 4 (1122 aa).

A disordered region spans residues 287–338; that stretch reads PGSTSSELPLNLTEEDFDDDGDEEMDKDSDVEAVKEDDDLETDLSKLSSKPG. Acidic residues predominate over residues 299 to 313; it reads TEEDFDDDGDEEMDK. In terms of domain architecture, Peptidase M14 spans 731–1021; the sequence is YPYTYSTLMT…MYCLGLLILE (291 aa). Zn(2+)-binding residues include H803, E806, and H900. E985 acts as the Proton donor/acceptor in catalysis. The tract at residues 1099-1122 is disordered; that stretch reads CALNKDEEEEEKEEGTGWRRRSVT.

The protein belongs to the peptidase M14 family. In terms of assembly, interacts with MYLK. Interacts with TCF4. Requires Zn(2+) as cofactor. In terms of tissue distribution, widely expressed at low level. Expressed in eye, muscle, pituitary, testis and to a lower extent in brain.

The protein resides in the cytoplasm. Its subcellular location is the cytosol. It catalyses the reaction (L-glutamyl)(n+1)-gamma-L-glutamyl-L-glutamyl-[protein] + H2O = (L-glutamyl)(n)-gamma-L-glutamyl-L-glutamyl-[protein] + L-glutamate. It carries out the reaction C-terminal L-alpha-aminoacyl-L-glutamyl-L-glutamyl-[tubulin] + H2O = C-terminal L-alpha-aminoacyl-L-glutamyl-[tubulin] + L-glutamate. In terms of biological role, metallocarboxypeptidase that mediates deglutamylation of tubulin and non-tubulin target proteins. Catalyzes the removal of polyglutamate side chains present on the gamma-carboxyl group of glutamate residues within the C-terminal tail of tubulin protein. Specifically cleaves tubulin long-side-chains, while it is not able to remove the branching point glutamate. Also catalyzes the removal of polyglutamate residues from the carboxy-terminus of non-tubulin proteins such as MYLK. In Mus musculus (Mouse), this protein is Cytosolic carboxypeptidase 4.